We begin with the raw amino-acid sequence, 784 residues long: LPS-assembly protein LptD (784 aa).

The first 24 residues, 1 to 24, serve as a signal peptide directing secretion; that stretch reads MKKRIPTLLATMIATALYSQQGLA. 2 cysteine pairs are disulfide-bonded: C31–C724 and C173–C725.

It belongs to the LptD family. In terms of assembly, component of the lipopolysaccharide transport and assembly complex. Interacts with LptE and LptA. In terms of processing, contains two intramolecular disulfide bonds.

It is found in the cell outer membrane. In terms of biological role, together with LptE, is involved in the assembly of lipopolysaccharide (LPS) at the surface of the outer membrane. In Shigella flexneri serotype 5b (strain 8401), this protein is LPS-assembly protein LptD.